Here is a 116-residue protein sequence, read N- to C-terminus: MSVESFTPTALQFTQGAAHKVKSLVDEEGNDRLKLRVFVTGGGCSGFQYGFTFDEDVAEDDTIVEREGVSLVVDPMSFQYLAGAEVDYQEGLEGSRFVIKNPNATTTCGCGSSFSI.

Iron-sulfur cluster is bound by residues Cys-44, Cys-108, and Cys-110.

This sequence belongs to the HesB/IscA family. Homodimer. Requires iron-sulfur cluster as cofactor.

In terms of biological role, required for insertion of 4Fe-4S clusters for at least IspG. The polypeptide is Iron-sulfur cluster insertion protein ErpA (Pseudomonas fluorescens (strain Pf0-1)).